A 193-amino-acid polypeptide reads, in one-letter code: Potassium-transporting ATPase KdpC subunit (193 aa).

Residues 7–27 (PLVVLFVVLNAVTGLAYPAVM) traverse the membrane as a helical segment.

The protein belongs to the KdpC family. In terms of assembly, the system is composed of three essential subunits: KdpA, KdpB and KdpC.

The protein resides in the cell inner membrane. Part of the high-affinity ATP-driven potassium transport (or Kdp) system, which catalyzes the hydrolysis of ATP coupled with the electrogenic transport of potassium into the cytoplasm. This subunit acts as a catalytic chaperone that increases the ATP-binding affinity of the ATP-hydrolyzing subunit KdpB by the formation of a transient KdpB/KdpC/ATP ternary complex. This chain is Potassium-transporting ATPase KdpC subunit, found in Burkholderia cenocepacia (strain HI2424).